We begin with the raw amino-acid sequence, 586 residues long: DNA-binding protein RFX8 (586 aa).

Positions 22-97 (VIQWLVDNFC…YHYDGICIKK (76 aa)) form a DNA-binding region, RFX-type winged-helix.

It belongs to the RFX family.

The protein localises to the nucleus. In terms of biological role, may be a transcription factor. The protein is DNA-binding protein RFX8 (RFX8) of Homo sapiens (Human).